A 739-amino-acid polypeptide reads, in one-letter code: Phosphoribosylformylglycinamidine synthase subunit PurL (739 aa).

His54 is a catalytic residue. ATP-binding residues include Tyr57 and Lys96. Position 98 (Glu98) interacts with Mg(2+). Residues 99-102 (SHNH) and Arg121 each bind substrate. Residue His100 is the Proton acceptor of the active site. Asp122 lines the Mg(2+) pocket. Gln245 provides a ligand contact to substrate. Asp273 lines the Mg(2+) pocket. Position 317–319 (317–319 (ESQ)) interacts with substrate. 2 residues coordinate ATP: Asp500 and Gly537. Asn538 contacts Mg(2+). Residue Ser540 coordinates substrate.

It belongs to the FGAMS family. Monomer. Part of the FGAM synthase complex composed of 1 PurL, 1 PurQ and 2 PurS subunits.

The protein resides in the cytoplasm. The catalysed reaction is N(2)-formyl-N(1)-(5-phospho-beta-D-ribosyl)glycinamide + L-glutamine + ATP + H2O = 2-formamido-N(1)-(5-O-phospho-beta-D-ribosyl)acetamidine + L-glutamate + ADP + phosphate + H(+). The protein operates within purine metabolism; IMP biosynthesis via de novo pathway; 5-amino-1-(5-phospho-D-ribosyl)imidazole from N(2)-formyl-N(1)-(5-phospho-D-ribosyl)glycinamide: step 1/2. Part of the phosphoribosylformylglycinamidine synthase complex involved in the purines biosynthetic pathway. Catalyzes the ATP-dependent conversion of formylglycinamide ribonucleotide (FGAR) and glutamine to yield formylglycinamidine ribonucleotide (FGAM) and glutamate. The FGAM synthase complex is composed of three subunits. PurQ produces an ammonia molecule by converting glutamine to glutamate. PurL transfers the ammonia molecule to FGAR to form FGAM in an ATP-dependent manner. PurS interacts with PurQ and PurL and is thought to assist in the transfer of the ammonia molecule from PurQ to PurL. In Bacillus cereus (strain ZK / E33L), this protein is Phosphoribosylformylglycinamidine synthase subunit PurL.